Consider the following 124-residue polypeptide: Putative B3 domain-containing protein At1g51970 (124 aa).

Residues 18–124 constitute a DNA-binding region (TF-B3); it reads VLKKNLTESD…SRRFLFHHIN (107 aa).

It is found in the nucleus. This Arabidopsis thaliana (Mouse-ear cress) protein is Putative B3 domain-containing protein At1g51970.